The sequence spans 214 residues: ATP phosphoribosyltransferase (214 aa).

This sequence belongs to the ATP phosphoribosyltransferase family. Short subfamily. Heteromultimer composed of HisG and HisZ subunits.

Its subcellular location is the cytoplasm. The catalysed reaction is 1-(5-phospho-beta-D-ribosyl)-ATP + diphosphate = 5-phospho-alpha-D-ribose 1-diphosphate + ATP. It participates in amino-acid biosynthesis; L-histidine biosynthesis; L-histidine from 5-phospho-alpha-D-ribose 1-diphosphate: step 1/9. In terms of biological role, catalyzes the condensation of ATP and 5-phosphoribose 1-diphosphate to form N'-(5'-phosphoribosyl)-ATP (PR-ATP). Has a crucial role in the pathway because the rate of histidine biosynthesis seems to be controlled primarily by regulation of HisG enzymatic activity. In Marinomonas sp. (strain MWYL1), this protein is ATP phosphoribosyltransferase.